Here is a 108-residue protein sequence, read N- to C-terminus: uncharacterized protein (108 aa).

Positions 20–74 constitute an HTH cro/C1-type domain; the sequence is VRQRRTALILDQETLARRIGVSFQQIQKYERGRNRISASRLYDIAKALAVPIDYF. A DNA-binding region (H-T-H motif) is located at residues 31 to 50; it reads QETLARRIGVSFQQIQKYER.

This is an uncharacterized protein from Rhodospirillum rubrum.